We begin with the raw amino-acid sequence, 374 residues long: Ribonuclease D (374 aa).

In terms of domain architecture, 3'-5' exonuclease spans 6–171; it reads IISTTEDLKK…RATRVILLSK (166 aa). An HRDC domain is found at 213 to 292; the sequence is DRKSIGVAQE…ARALNKKEVD (80 aa).

This sequence belongs to the RNase D family. The cofactor is a divalent metal cation.

The protein resides in the cytoplasm. It catalyses the reaction Exonucleolytic cleavage that removes extra residues from the 3'-terminus of tRNA to produce 5'-mononucleotides.. Exonuclease involved in the 3' processing of various precursor tRNAs. Initiates hydrolysis at the 3'-terminus of an RNA molecule and releases 5'-mononucleotides. The chain is Ribonuclease D from Desulfotalea psychrophila (strain LSv54 / DSM 12343).